The chain runs to 180 residues: MVRESIPKEGENIKIQSYKHDGKIHRVWSETTILKGTDHVVIGGNDHTLVTESDGRTWITREPAIVYFHSEYWFNVICMFREDGIYYYCNLSSPFVCDEEALKYIDYDLDIKVYPNGKYHLLDEDEYEQHMNQMNYPHDIDIILRRNVDILQQWIEQKKGPFAPDFIKVWKERYKKIRQY.

Arginine 26 serves as the catalytic Proton donor. 6 residues coordinate Mg(2+): asparagine 90, aspartate 106, aspartate 108, aspartate 110, aspartate 123, and glutamate 126.

It belongs to the Ntdp family. Mg(2+) is required as a cofactor.

It carries out the reaction a ribonucleoside 5'-triphosphate + H2O = a ribonucleoside 5'-diphosphate + phosphate + H(+). It catalyses the reaction a ribonucleoside 5'-diphosphate + H2O = a ribonucleoside 5'-phosphate + phosphate + H(+). Functionally, has nucleoside phosphatase activity towards nucleoside triphosphates and nucleoside diphosphates. In Staphylococcus aureus (strain Mu3 / ATCC 700698), this protein is Nucleoside triphosphate/diphosphate phosphatase.